The sequence spans 225 residues: MNSIKFPVLDRTTKNSVISTTLNDLSNWSRLSSLWPLLYGTSCCFIEFASLIGSRFDFDRYGLVPRSSPRQADLILTAGTVTMKMAPSLVRLYEQMPEPKYVIAMGACTITGGMFSTDSYSTVRGVDKLIPVDVYLPGCPPKPEAVIDAITKLRKKIAREIYKDRIRPQRGNRCFTTNHKFFVVGSPHTGNYDQELLYAPSSTSEISTETFFKYKSPVSSNELVN.

Residues C43, C44, C108, and C139 each contribute to the [4Fe-4S] cluster site.

The protein belongs to the complex I 20 kDa subunit family. In terms of assembly, NDH is composed of at least 16 different subunits, 5 of which are encoded in the nucleus. It depends on [4Fe-4S] cluster as a cofactor.

It localises to the plastid. It is found in the chloroplast thylakoid membrane. The enzyme catalyses a plastoquinone + NADH + (n+1) H(+)(in) = a plastoquinol + NAD(+) + n H(+)(out). The catalysed reaction is a plastoquinone + NADPH + (n+1) H(+)(in) = a plastoquinol + NADP(+) + n H(+)(out). Its function is as follows. NDH shuttles electrons from NAD(P)H:plastoquinone, via FMN and iron-sulfur (Fe-S) centers, to quinones in the photosynthetic chain and possibly in a chloroplast respiratory chain. The immediate electron acceptor for the enzyme in this species is believed to be plastoquinone. Couples the redox reaction to proton translocation, and thus conserves the redox energy in a proton gradient. The sequence is that of NAD(P)H-quinone oxidoreductase subunit K, chloroplastic from Barbarea verna (Land cress).